Consider the following 217-residue polypeptide: 3,4-dihydroxy-2-butanone 4-phosphate synthase (217 aa).

D-ribulose 5-phosphate contacts are provided by residues R37–E38, D42, R150–T154, and E174. E38 is a Mg(2+) binding site. H153 lines the Mg(2+) pocket.

It belongs to the DHBP synthase family. In terms of assembly, homodimer. Mg(2+) serves as cofactor. Mn(2+) is required as a cofactor.

It carries out the reaction D-ribulose 5-phosphate = (2S)-2-hydroxy-3-oxobutyl phosphate + formate + H(+). Its pathway is cofactor biosynthesis; riboflavin biosynthesis; 2-hydroxy-3-oxobutyl phosphate from D-ribulose 5-phosphate: step 1/1. Functionally, catalyzes the conversion of D-ribulose 5-phosphate to formate and 3,4-dihydroxy-2-butanone 4-phosphate. This Shewanella putrefaciens (strain CN-32 / ATCC BAA-453) protein is 3,4-dihydroxy-2-butanone 4-phosphate synthase.